The primary structure comprises 243 residues: 3-deoxy-manno-octulosonate cytidylyltransferase (243 aa).

Belongs to the KdsB family.

Its subcellular location is the cytoplasm. It carries out the reaction 3-deoxy-alpha-D-manno-oct-2-ulosonate + CTP = CMP-3-deoxy-beta-D-manno-octulosonate + diphosphate. It participates in nucleotide-sugar biosynthesis; CMP-3-deoxy-D-manno-octulosonate biosynthesis; CMP-3-deoxy-D-manno-octulosonate from 3-deoxy-D-manno-octulosonate and CTP: step 1/1. The protein operates within bacterial outer membrane biogenesis; lipopolysaccharide biosynthesis. Its function is as follows. Activates KDO (a required 8-carbon sugar) for incorporation into bacterial lipopolysaccharide in Gram-negative bacteria. This chain is 3-deoxy-manno-octulosonate cytidylyltransferase, found in Helicobacter pylori (strain J99 / ATCC 700824) (Campylobacter pylori J99).